Consider the following 361-residue polypeptide: Phospho-N-acetylmuramoyl-pentapeptide-transferase (361 aa).

Helical transmembrane passes span 25 to 45 (RAVL…PWVI), 73 to 93 (TMGG…WADL), 97 to 117 (YVWL…YDDW), 134 to 154 (MFWQ…TASL), 168 to 188 (VIYP…IVGT), 200 to 220 (GLAA…AYVA), 240 to 260 (VAVF…FNAY), 264 to 284 (VFMG…VAVI), 289 to 309 (IVLF…MIQV), and 338 to 358 (QVVV…LSTL).

Belongs to the glycosyltransferase 4 family. MraY subfamily. The cofactor is Mg(2+).

It is found in the cell inner membrane. It catalyses the reaction UDP-N-acetyl-alpha-D-muramoyl-L-alanyl-gamma-D-glutamyl-meso-2,6-diaminopimeloyl-D-alanyl-D-alanine + di-trans,octa-cis-undecaprenyl phosphate = di-trans,octa-cis-undecaprenyl diphospho-N-acetyl-alpha-D-muramoyl-L-alanyl-D-glutamyl-meso-2,6-diaminopimeloyl-D-alanyl-D-alanine + UMP. The protein operates within cell wall biogenesis; peptidoglycan biosynthesis. In terms of biological role, catalyzes the initial step of the lipid cycle reactions in the biosynthesis of the cell wall peptidoglycan: transfers peptidoglycan precursor phospho-MurNAc-pentapeptide from UDP-MurNAc-pentapeptide onto the lipid carrier undecaprenyl phosphate, yielding undecaprenyl-pyrophosphoryl-MurNAc-pentapeptide, known as lipid I. This is Phospho-N-acetylmuramoyl-pentapeptide-transferase from Laribacter hongkongensis (strain HLHK9).